We begin with the raw amino-acid sequence, 213 residues long: Flagellin A1 (213 aa).

Positions methionine 1 to glycine 10 are excised as a propeptide. 3 N-linked (GlcNAc...) asparagine glycosylation sites follow: asparagine 70, asparagine 115, and asparagine 172.

The protein belongs to the archaeal flagellin family. Post-translationally, glycosylated by a pentasaccharide similar to the S-layer glycoprotein, probably comprising a hexose, 2 hexuronic acids, a methyl ester of a hexuronic acid and mannose. Glycosylation is required for biosynthesis of stable flagella.

The protein resides in the archaeal flagellum. Functionally, major flagellin required for motility. Not involved in PibD-dependent surface adhesion. Much more abundant in cells compared to FlgA2. This is Flagellin A1 (flgA1) from Haloferax volcanii (strain ATCC 29605 / DSM 3757 / JCM 8879 / NBRC 14742 / NCIMB 2012 / VKM B-1768 / DS2) (Halobacterium volcanii).